A 697-amino-acid polypeptide reads, in one-letter code: Sentrin-specific protease (697 aa).

Residues 1–14 are compositionally biased toward basic and acidic residues; the sequence is MSRRSDLSDKDSQS. Disordered stretches follow at residues 1-47 and 365-387; these read MSRR…QGLG and SEES…SDSY. The Nuclear localization signal motif lies at 15-19; it reads RKRHW. The Nuclear localization signal signature appears at 462 to 467; that stretch reads KVEKKK. Residues 501–664 are protease; it reads IQICKKDLAT…VFSCQFGEWA (164 aa). Residues His-585, Asp-602, and Cys-653 contribute to the active site.

It belongs to the peptidase C48 family.

The protein localises to the nucleus envelope. Functionally, protease that deconjugates smo-1 from targeted proteins and may catalyze the processing of smo-1 to its mature form. This Caenorhabditis elegans protein is Sentrin-specific protease (ulp-1).